A 96-amino-acid polypeptide reads, in one-letter code: Protein Vpr (96 aa).

The segment at 1-42 is homooligomerization; the sequence is MEQAPEDQGPPREPYQEWALETLEELKNEAVRHFPRPWLHQL. Phosphoserine; by host is present on residues S79 and S96.

It belongs to the HIV-1 VPR protein family. Homooligomer, may form homodimer. Interacts with p6-gag region of the Pr55 Gag precursor protein through a (Leu-X-X)4 motif near the C-terminus of the P6gag protein. Interacts with host UNG. May interact with host RAD23A/HHR23A. Interacts with host VPRBP/DCAF1, leading to hijack the CUL4A-RBX1-DDB1-DCAF1/VPRBP complex, mediating ubiquitination of host proteins such as TERT and ZGPAT and arrest of the cell cycle in G2 phase. Post-translationally, phosphorylated on several residues by host. These phosphorylations regulate VPR activity for the nuclear import of the HIV-1 pre-integration complex.

The protein localises to the virion. The protein resides in the host nucleus. It is found in the host extracellular space. Its function is as follows. During virus replication, may deplete host UNG protein, and incude G2-M cell cycle arrest. Acts by targeting specific host proteins for degradation by the 26S proteasome, through association with the cellular CUL4A-DDB1 E3 ligase complex by direct interaction with host VPRPB/DCAF-1. Cell cycle arrest reportedly occurs within hours of infection and is not blocked by antiviral agents, suggesting that it is initiated by the VPR carried into the virion. Additionally, VPR induces apoptosis in a cell cycle dependent manner suggesting that these two effects are mechanistically linked. Detected in the serum and cerebrospinal fluid of AIDS patient, VPR may also induce cell death to bystander cells. Functionally, during virus entry, plays a role in the transport of the viral pre-integration (PIC) complex to the host nucleus. This function is crucial for viral infection of non-dividing macrophages. May act directly at the nuclear pore complex, by binding nucleoporins phenylalanine-glycine (FG)-repeat regions. This Pan (chimpanzees) protein is Protein Vpr.